Here is a 69-residue protein sequence, read N- to C-terminus: Small, acid-soluble spore protein I (69 aa).

It belongs to the SspI family.

It is found in the spore core. The chain is Small, acid-soluble spore protein I from Bacillus cereus (strain G9842).